A 454-amino-acid polypeptide reads, in one-letter code: tRNA modification GTPase MnmE (454 aa).

The (6S)-5-formyl-5,6,7,8-tetrahydrofolate site is built by arginine 26, glutamate 84, and lysine 123. Positions 219–378 (GLQVVIAGKP…LVDAITAHAG (160 aa)) constitute a TrmE-type G domain. Asparagine 229 is a binding site for K(+). Residues 229–234 (NAGKSS), 248–254 (TDIAGTT), and 273–276 (DTAG) each bind GTP. Residue serine 233 participates in Mg(2+) binding. K(+)-binding residues include threonine 248, isoleucine 250, and threonine 253. Threonine 254 serves as a coordination point for Mg(2+). Lysine 454 contributes to the (6S)-5-formyl-5,6,7,8-tetrahydrofolate binding site.

It belongs to the TRAFAC class TrmE-Era-EngA-EngB-Septin-like GTPase superfamily. TrmE GTPase family. In terms of assembly, homodimer. Heterotetramer of two MnmE and two MnmG subunits. The cofactor is K(+).

It localises to the cytoplasm. Exhibits a very high intrinsic GTPase hydrolysis rate. Involved in the addition of a carboxymethylaminomethyl (cmnm) group at the wobble position (U34) of certain tRNAs, forming tRNA-cmnm(5)s(2)U34. In Acinetobacter baumannii (strain ATCC 17978 / DSM 105126 / CIP 53.77 / LMG 1025 / NCDC KC755 / 5377), this protein is tRNA modification GTPase MnmE.